The following is a 684-amino-acid chain: MSNKRKMLVTCALPYANGAIHLGHMLEHIQADIWVRFQRMRGHQVYFVCADDAHGTPIMLNAAKQGITPEQLIAKAKADHIADFQSFNISFDNYHSTHSEENRNITTAMYKTLRDKGLIKTRVISQLFDPEKQMFLPDRFVKGTCPKCQAEDQYGDNCEVCASTYSPMDLINPHSVVSGATPIVKQSEHFFFDLPNFEAMLKTWTHSGSLQPQIANKMQEWFESGLQQWDISRDAPYFGFPIPDTENKFFYVWLDAPIGYMASFKNLCDRTGLNYEEFWQKESKTELYHFIGKDIVYFHSLFWPAMLEGCDQRKPTNIFAHGYVTVDGVKMSKSRGTFIQASTYLKHIDPECLRYYYAAKLNERIEDLDLNLDDFVQRVNSDIVNKLVNLASRNASFITKRFAGNLADKLEDEALFAEFVAQASNIADHYEAREYNKAIRLIMDLCDKANKYVDDKAPWVIAKQADREAELHAVCSMGIELFRILISYLKPVLPQLATRAEAFLQTELRWDNIASPLLNQNVAPFKSLFSRLEKKQIDRVIEETKALFSTQPKTEQPQVASTMNDNQQQNIEPIAAEISIDDFAKLDLRVAKVIQCEAVPESNKLLKFQLDLGDHQRQVLSGIKAAYSKPEELNGRFVIMVANLAPRKMKFGLSEGMILSAGTGGADLFLLSGDCGIRPGMQVK.

Residues 14 to 24 (PYANGAIHLGH) carry the 'HIGH' region motif. Zn(2+)-binding residues include cysteine 145, cysteine 148, cysteine 158, and cysteine 161. The short motif at 330-334 (KMSKS) is the 'KMSKS' region element. An ATP-binding site is contributed by lysine 333. The 103-residue stretch at 582-684 (DFAKLDLRVA…CGIRPGMQVK (103 aa)) folds into the tRNA-binding domain.

It belongs to the class-I aminoacyl-tRNA synthetase family. MetG type 1 subfamily. Homodimer. The cofactor is Zn(2+).

It localises to the cytoplasm. The enzyme catalyses tRNA(Met) + L-methionine + ATP = L-methionyl-tRNA(Met) + AMP + diphosphate. In terms of biological role, is required not only for elongation of protein synthesis but also for the initiation of all mRNA translation through initiator tRNA(fMet) aminoacylation. This is Methionine--tRNA ligase from Haemophilus ducreyi (strain 35000HP / ATCC 700724).